Reading from the N-terminus, the 5255-residue chain is Bacitracin synthase 1 (5255 aa).

The domain 1 (isoleucine-activating) stretch occupies residues 39 to 612; the sequence is LHELFEEQAM…IKELSAFIEA (574 aa). A compositionally biased stretch (basic and acidic residues) spans 519-531; it reads VDRKALPEPDRTA. A disordered region spans residues 519 to 542; it reads VDRKALPEPDRTAGAENEYEAPRN. The region spanning 539-614 is the Carrier 1 domain; sequence APRNETEEKL…ELSAFIEANH (76 aa). S574 is modified (O-(pantetheine 4'-phosphoryl)serine). The tract at residues 621-1037 is cyclization; the sequence is TLVTRAADPE…ITWDYVEQIF (417 aa). Positions 1109–1648 are domain 2 (cysteine-activating); the sequence is HHDEVMTYQE…FKNDTIIALD (540 aa). 4 consecutive Carrier domains span residues 1580 to 1655, 2616 to 2691, 3659 to 3733, and 5166 to 5241; these read LPEN…KNRE, APRD…VRRR, PPRN…TEET, and APRN…LTAE. O-(pantetheine 4'-phosphoryl)serine occurs at positions 1615, 2651, 3694, and 5201. Residues 2124–2689 are domain 3 (leucine-activating); sequence GKAIHQLFEE…IKGLRDISVR (566 aa). Residues 3164-3732 are domain 4 (glutamine-activating); it reads DHPAVAFGDE…KDLSRFITEE (569 aa). The interval 4668 to 5249 is domain 5 (isoleucine-activating); it reads LHELFEEQAM…AEAESAVSEE (582 aa).

Belongs to the ATP-dependent AMP-binding enzyme family. Large multienzyme complex of BA1, BA2 and BA3. Requires pantetheine 4'-phosphate as cofactor.

It catalyses the reaction L-glutamate = D-glutamate. It participates in antibiotic biosynthesis; bacitracin biosynthesis. In terms of biological role, activates five amino acids, incorporates two D-amino acids, releases and cyclizes the mature bacitracin. The polypeptide is Bacitracin synthase 1 (bacA) (Bacillus licheniformis).